A 244-amino-acid chain; its full sequence is Glucosamine-6-phosphate deaminase (244 aa).

Asp-67 serves as the catalytic Proton acceptor; for enolization step. Asn-136 functions as the For ring-opening step in the catalytic mechanism. His-138 serves as the catalytic Proton acceptor; for ring-opening step. The active-site For ring-opening step is the Glu-143.

This sequence belongs to the glucosamine/galactosamine-6-phosphate isomerase family. NagB subfamily.

The catalysed reaction is alpha-D-glucosamine 6-phosphate + H2O = beta-D-fructose 6-phosphate + NH4(+). The protein operates within amino-sugar metabolism; N-acetylneuraminate degradation; D-fructose 6-phosphate from N-acetylneuraminate: step 5/5. Functionally, catalyzes the reversible isomerization-deamination of glucosamine 6-phosphate (GlcN6P) to form fructose 6-phosphate (Fru6P) and ammonium ion. This chain is Glucosamine-6-phosphate deaminase, found in Clostridium botulinum (strain Loch Maree / Type A3).